Reading from the N-terminus, the 393-residue chain is Short-chain dehydrogenase/reductase family 42E member 1 (393 aa).

The active-site Proton acceptor is Tyr152. Lys156 contributes to the NAD(+) binding site. 2 helical membrane passes run Leu282–Gly302 and Gly371–Leu391.

It belongs to the 3-beta-HSD family.

The protein localises to the membrane. This Macaca fascicularis (Crab-eating macaque) protein is Short-chain dehydrogenase/reductase family 42E member 1 (SDR42E1).